We begin with the raw amino-acid sequence, 699 residues long: 1,4-alpha-glucan-branching enzyme (699 aa).

Substrate-binding positions include 59–60 (NE) and 88–90 (WAP). W104 contacts (1,4-alpha-D-glucosyl)n. Residue 115-118 (DYGK) coordinates substrate. K140 provides a ligand contact to (1,4-alpha-D-glucosyl)n. Phosphotyrosine is present on Y170. Position 330–333 (330–333 (EVLR)) interacts with substrate. The active-site Nucleophile is the D354. Catalysis depends on E409, which acts as the Proton donor.

This sequence belongs to the glycosyl hydrolase 13 family. GlgB subfamily. As to quaternary structure, monomer.

It catalyses the reaction Transfers a segment of a (1-&gt;4)-alpha-D-glucan chain to a primary hydroxy group in a similar glucan chain.. Its pathway is glycan biosynthesis; glycogen biosynthesis. Its function is as follows. Glycogen-branching enzyme participates in the glycogen biosynthetic process along with glycogenin and glycogen synthase. Generates alpha-1,6-glucosidic branches from alpha-1,4-linked glucose chains, to increase solubility of the glycogen polymer. This chain is 1,4-alpha-glucan-branching enzyme (GBE1), found in Equus caballus (Horse).